Here is a 553-residue protein sequence, read N- to C-terminus: uncharacterized protein (553 aa).

The next 5 membrane-spanning stretches (helical) occupy residues 13–30 (ALQA…GLGL), 37–59 (GISL…GLSI), 69–91 (SFGL…FSSF), 98–120 (LNML…SYTT), and 157–179 (TPAL…AVLL). RCK C-terminal domains lie at 190–273 (LEVQ…LFGE) and 281–365 (KEDI…VLGN). 6 helical membrane passes run 375-397 (LVAV…SIPG), 402-424 (VRLG…GPRL), 436-458 (LMLR…GAHF), 468-490 (LLWI…FFAF), 497-514 (FGSV…PMAL), and 529-551 (AYAT…LLMF).

The protein belongs to the AAE transporter (TC 2.A.81) family.

The protein resides in the cell membrane. This is an uncharacterized protein from Bacteroides fragilis (strain YCH46).